A 491-amino-acid chain; its full sequence is Glutamyl-tRNA(Gln) amidotransferase subunit A (491 aa).

Catalysis depends on charge relay system residues Lys78 and Ser158. Ser182 acts as the Acyl-ester intermediate in catalysis.

It belongs to the amidase family. GatA subfamily. Heterotrimer of A, B and C subunits.

The enzyme catalyses L-glutamyl-tRNA(Gln) + L-glutamine + ATP + H2O = L-glutaminyl-tRNA(Gln) + L-glutamate + ADP + phosphate + H(+). In terms of biological role, allows the formation of correctly charged Gln-tRNA(Gln) through the transamidation of misacylated Glu-tRNA(Gln) in organisms which lack glutaminyl-tRNA synthetase. The reaction takes place in the presence of glutamine and ATP through an activated gamma-phospho-Glu-tRNA(Gln). This chain is Glutamyl-tRNA(Gln) amidotransferase subunit A, found in Bradyrhizobium sp. (strain BTAi1 / ATCC BAA-1182).